The chain runs to 332 residues: Ribosomal RNA small subunit methyltransferase C (332 aa).

This sequence belongs to the methyltransferase superfamily. RsmC family. Monomer.

It localises to the cytoplasm. The enzyme catalyses guanosine(1207) in 16S rRNA + S-adenosyl-L-methionine = N(2)-methylguanosine(1207) in 16S rRNA + S-adenosyl-L-homocysteine + H(+). Specifically methylates the guanine in position 1207 of 16S rRNA in the 30S particle. This is Ribosomal RNA small subunit methyltransferase C from Pseudomonas putida (strain ATCC 700007 / DSM 6899 / JCM 31910 / BCRC 17059 / LMG 24140 / F1).